The following is a 2167-amino-acid chain: GTPase-activating protein BEM2/IPL2 (2167 aa).

3 disordered regions span residues 1–209, 243–305, and 353–372; these read MKGL…NDNE, TNYN…ASAR, and NSSI…NNQA. The span at 12–51 shows a compositional bias: low complexity; the sequence is SSTASASSSSTSTSHKTTTASTASSSSPSSSSQTIRNSTS. A Glycyl lysine isopeptide (Lys-Gly) (interchain with G-Cter in ubiquitin) cross-link involves residue Lys-27. Over residues 58 to 70 the composition is skewed to basic residues; the sequence is HSHHHHGQGHSHH. Over residues 89 to 118 the composition is skewed to polar residues; that stretch reads KQYTSTSSSQVNLGMYHSDTNTRSSRSIAS. At Ser-129 the chain carries Phosphoserine. The span at 134 to 145 shows a compositional bias: polar residues; sequence SNSSSQKSNAQD. 2 stretches are compositionally biased toward low complexity: residues 160 to 177 and 187 to 207; these read SLLP…SRCS and NTSG…NNND. The span at 243 to 252 shows a compositional bias: polar residues; the sequence is TNYNSSMTAP. Residue Ser-283 is modified to Phosphoserine. A compositionally biased stretch (low complexity) spans 289–300; the sequence is SSSTTATNSGND. A Ras-GEF domain is found at 592-859; sequence DITTLADEVH…MKLSVQHEPP (268 aa). Ser-1012 and Ser-1016 each carry phosphoserine. A Phosphothreonine modification is found at Thr-1038. Residues Ser-1046, Ser-1054, and Ser-1128 each carry the phosphoserine modification. The segment covering 1771-1794 has biased composition (polar residues); the sequence is ISGTHSDNDHSYNINKNTGQTPSL. Residues 1771 to 1828 form a disordered region; sequence ISGTHSDNDHSYNINKNTGQTPSLGSVMESNNSARNRRDSRASFSTNRSSVVSNSSHN. The segment covering 1812–1828 has biased composition (low complexity); it reads ASFSTNRSSVVSNSSHN. The region spanning 1846–1948 is the PH domain; that stretch reads GFNTSSSNYS…WIKMIKASKR (103 aa). Residues 1967 to 2165 enclose the Rho-GAP domain; that stretch reads VPLEDVCERE…DFIKNPNDYF (199 aa).

In terms of biological role, GTPase-activating protein (GAP) for RHO1 and RHO2. Involved in the control of cellular morphogenesis. Required for proper bud site selection and bud emergence. This chain is GTPase-activating protein BEM2/IPL2 (BEM2), found in Saccharomyces cerevisiae (strain ATCC 204508 / S288c) (Baker's yeast).